A 486-amino-acid polypeptide reads, in one-letter code: MPVSPAFNPQDALRFLPEIILTVMGTLLMVLDPVIHKRSSNAFGHISLIALVMALGASIYAYGIAGPAFGGMLMVDGFATFFRVVVITVGILTVFPSYRFLARQDAETSEYHALLLFSIAGQCLMAASNDLIMVFIGLEISSIASYVLAGYLRDDKRANEAALKYFLLGSFATGFFLYGVAWIYGLTRSVNLSVVRGVFQHQPVDPTFVGIAAALMFVGLAFKVSAAPFQIWAPDVYQGAPTPVSAFLSAGPKAAAFAIFLRIFMTAFEPISDKWQPLVWTAALASMCIGNFAAILQTNIKRMLAYSSIAHAGYVLVALTAHSETGVAAAMFYLAGYAFMNVGAFAAVSVLTGKGERYQNIDDFKGMGRKQPLAAAMFTIFLLSLLGVPLTGGFFGKFYIFKAALDSHLIWLTVLGLLNSAVGAYYYLRILVVMYMYEPGEAADAAEPLAPSLAFALILPALGTLALGIFPGWVLEFATKSAANLK.

The next 14 helical transmembrane spans lie at 15–35, 46–66, 72–92, 111–128, 131–151, 166–186, 208–228, 241–261, 276–296, 303–323, 331–351, 375–395, 410–432, and 455–475; these read FLPEIILTVMGTLLMVLDPVI, ISLIALVMALGASIYAYGIAG, MLMVDGFATFFRVVVITVGIL, YHALLLFSIAGQCLMAAS, LIMVFIGLEISSIASYVLAGY, FLLGSFATGFFLYGVAWIYGL, FVGIAAALMFVGLAFKVSAAP, PTPVSAFLSAGPKAAAFAIFL, QPLVWTAALASMCIGNFAAIL, MLAYSSIAHAGYVLVALTAHS, MFYLAGYAFMNVGAFAAVSVL, AAMFTIFLLSLLGVPLTGGFF, IWLTVLGLLNSAVGAYYYLRILV, and FALILPALGTLALGIFPGWVL.

It belongs to the complex I subunit 2 family. In terms of assembly, NDH-1 is composed of 14 different subunits. Subunits NuoA, H, J, K, L, M, N constitute the membrane sector of the complex.

The protein localises to the cell inner membrane. The catalysed reaction is a quinone + NADH + 5 H(+)(in) = a quinol + NAD(+) + 4 H(+)(out). In terms of biological role, NDH-1 shuttles electrons from NADH, via FMN and iron-sulfur (Fe-S) centers, to quinones in the respiratory chain. The immediate electron acceptor for the enzyme in this species is believed to be ubiquinone. Couples the redox reaction to proton translocation (for every two electrons transferred, four hydrogen ions are translocated across the cytoplasmic membrane), and thus conserves the redox energy in a proton gradient. The polypeptide is NADH-quinone oxidoreductase subunit N 1 (Solibacter usitatus (strain Ellin6076)).